A 474-amino-acid polypeptide reads, in one-letter code: H/ACA ribonucleoprotein complex subunit CBF5 (474 aa).

Catalysis depends on D94, which acts as the Nucleophile. Residues 265-340 (YKRIVVKDSA…VVAKVKRCIM (76 aa)) form the PUA domain. 2 disordered regions span residues 356 to 375 (QKKKQMKADGKLDKYGRANE) and 390 to 474 (NAEP…KSKK). Basic and acidic residues-rich tracts occupy residues 361–372 (MKADGKLDKYGR) and 400–433 (KSEEKPLIKEVEKKEVEQKEESKEESKTPEEKKD). 9 consecutive repeat copies span residues 431-433 (KKD), 434-436 (KKE), 437-439 (KKE), 440-442 (KKD), 443-445 (KKE), 446-448 (KKE), 449-451 (KKE), 452-454 (KKE), and 455-457 (KKR). Residues 431–460 (KKDKKEKKEKKDKKEKKEKKEKKEKKRKAD) are 9 X 3 AA tandem repeats of K-K-[DE]. Over residues 434–456 (KKEKKEKKDKKEKKEKKEKKEKK) the composition is skewed to basic residues.

This sequence belongs to the pseudouridine synthase TruB family. As to quaternary structure, component of the small nucleolar ribonucleoprotein particles containing H/ACA-type snoRNAs (H/ACA snoRNPs).

It is found in the nucleus. It localises to the nucleolus. The enzyme catalyses uridine in 5S rRNA = pseudouridine in 5S rRNA. The catalysed reaction is uridine in snRNA = pseudouridine in snRNA. It carries out the reaction a uridine in mRNA = a pseudouridine in mRNA. Functionally, catalytic subunit of H/ACA small nucleolar ribonucleoprotein (H/ACA snoRNP) complex, which catalyzes pseudouridylation of rRNA. This involves the isomerization of uridine such that the ribose is subsequently attached to C5, instead of the normal N1. Pseudouridine ('psi') residues may serve to stabilize the conformation of rRNAs and play a central role in ribosomal RNA processing. The H/ACA snoRNP complex also mediates pseudouridylation of other types of RNAs. Catalyzes pseudouridylation at position 93 in U2 snRNA. Also catalyzes pseudouridylation of mRNAs; H/ACA-type snoRNAs probably guide pseudouridylation of mRNAs. This chain is H/ACA ribonucleoprotein complex subunit CBF5 (CBF5), found in Kluyveromyces lactis (strain ATCC 8585 / CBS 2359 / DSM 70799 / NBRC 1267 / NRRL Y-1140 / WM37) (Yeast).